Here is a 104-residue protein sequence, read N- to C-terminus: SOSS complex subunit C (104 aa).

This sequence belongs to the SOSS-C family. As to quaternary structure, belongs to the multiprotein complex Integrator. Component of the SOSS complex, composed of SOSS-B (SOSS-B1/NABP2 or SOSS-B2/NABP1), SOSS-A/INTS3 and SOSS-C/INIP.

The protein resides in the nucleus. Its function is as follows. Component of the SOSS complex, a multiprotein complex that functions downstream of the MRN complex to promote DNA repair and G2/M checkpoint. The SOSS complex associates with single-stranded DNA at DNA lesions and influences diverse endpoints in the cellular DNA damage response including cell-cycle checkpoint activation, recombinational repair and maintenance of genomic stability. Required for efficient homologous recombination-dependent repair of double-strand breaks (DSBs). The protein is SOSS complex subunit C (INIP) of Taeniopygia guttata (Zebra finch).